A 306-amino-acid chain; its full sequence is D-alanine--D-alanine ligase (306 aa).

The region spanning 101–300 (KVVMAAAGIP…FGELVTWMVE (200 aa)) is the ATP-grasp domain. 128–182 (LPPPYVLKPNTGGSSVGVFIVKEDQPHPPQELFRADWTFGESLMAEPFIKGLELT) serves as a coordination point for ATP. Residues D250, E267, and N269 each coordinate Mg(2+).

Belongs to the D-alanine--D-alanine ligase family. Mg(2+) is required as a cofactor. Mn(2+) serves as cofactor.

Its subcellular location is the cytoplasm. It carries out the reaction 2 D-alanine + ATP = D-alanyl-D-alanine + ADP + phosphate + H(+). It participates in cell wall biogenesis; peptidoglycan biosynthesis. Cell wall formation. The sequence is that of D-alanine--D-alanine ligase from Azorhizobium caulinodans (strain ATCC 43989 / DSM 5975 / JCM 20966 / LMG 6465 / NBRC 14845 / NCIMB 13405 / ORS 571).